A 597-amino-acid chain; its full sequence is Sialic acid-binding Ig-like lectin 12 (597 aa).

Positions 1–20 are cleaved as a signal peptide; it reads MLLLLLLLLLPPLLCGRVGA. 2 Ig-like V-type domains span residues 21-144 and 145-271; these read KEQK…VNVT and ASQD…VHVT. Over 21–483 the chain is Extracellular; sequence KEQKDYLLTM…RPISGVTLGA (463 aa). A disulfide bond links cysteine 46 and cysteine 106. Asparagine 142, asparagine 181, asparagine 232, and asparagine 292 each carry an N-linked (GlcNAc...) asparagine glycan. Disulfide bonds link cysteine 168–cysteine 301, cysteine 173–cysteine 233, and cysteine 295–cysteine 344. The region spanning 277-360 is the Ig-like C2-type 1 domain; sequence PTFSIPGTLE…AGVTTTRAVR (84 aa). Asparagine 362, asparagine 369, and asparagine 387 each carry an N-linked (GlcNAc...) asparagine glycan. The 98-residue stretch at 367-464 folds into the Ig-like C2-type 2 domain; that stretch reads PQNLTMTVFQ…GSQHISLSLS (98 aa). A disulfide bridge connects residues cysteine 403 and cysteine 448. A helical transmembrane segment spans residues 484 to 504; the sequence is VGGAGATALVFLSFCIIFVVV. The Cytoplasmic segment spans residues 505-597; it reads RSCRKKSARP…YEYSEINILK (93 aa). Residues 514–558 form a disordered region; the sequence is PAVGVGDTGMEDTNAVRGSASQGPLIESPADDSPPHHAPPALATP. Positions 565–570 match the ITIM motif motif; it reads IQYASL. Residues tyrosine 567 and tyrosine 590 each carry the phosphotyrosine modification. Residues 588 to 593 carry the SLAM-like motif motif; sequence YEYSEI.

It belongs to the immunoglobulin superfamily. SIGLEC (sialic acid binding Ig-like lectin) family.

Its subcellular location is the membrane. In terms of biological role, putative adhesion molecule that mediates sialic-acid dependent binding to cells. The sialic acid recognition site may be masked by cis interactions with sialic acids on the same cell surface. This Pan troglodytes (Chimpanzee) protein is Sialic acid-binding Ig-like lectin 12 (SIGLEC12).